An 89-amino-acid chain; its full sequence is Small ribosomal subunit protein uS15 (89 aa).

The interval 1–24 (MSLDTTEKQQLINSHQTHATDTGS) is disordered. Polar residues predominate over residues 8–24 (KQQLINSHQTHATDTGS).

It belongs to the universal ribosomal protein uS15 family. In terms of assembly, part of the 30S ribosomal subunit. Forms a bridge to the 50S subunit in the 70S ribosome, contacting the 23S rRNA.

In terms of biological role, one of the primary rRNA binding proteins, it binds directly to 16S rRNA where it helps nucleate assembly of the platform of the 30S subunit by binding and bridging several RNA helices of the 16S rRNA. Forms an intersubunit bridge (bridge B4) with the 23S rRNA of the 50S subunit in the ribosome. The chain is Small ribosomal subunit protein uS15 from Synechococcus sp. (strain CC9311).